A 296-amino-acid chain; its full sequence is Splicing factor U2af small subunit A (296 aa).

The segment at 12–40 (EKDRVNCPFYFKIGACRHGDRCSRLHNRP) adopts a C3H1-type 1 zinc-finger fold. Residues 44-146 (PTLLLSNMYQ…RPIIADFSPV (103 aa)) form the RRM domain. The segment at 148–175 (DFREATCRQYEENNCNRGGYCNFMHVKL) adopts a C3H1-type 2 zinc-finger fold. Residues 191-202 (SYRRGSRSRSRS) are compositionally biased toward basic residues. Positions 191–296 (SYRRGSRSRS…EREEKEEGGA (106 aa)) are disordered. Basic and acidic residues-rich tracts occupy residues 209–254 (NKRD…DGSR) and 272–296 (EGSEERRARIEQWNREREEKEEGGA).

This sequence belongs to the splicing factor SR family. Component of the spliceosome. Homo- and heterodimer. Interacts with U2AF35B, RNU1 and SR45.

It localises to the nucleus speckle. Functionally, necessary for the splicing of pre-mRNA. Probably active at the 3' splice sites. The polypeptide is Splicing factor U2af small subunit A (Arabidopsis thaliana (Mouse-ear cress)).